The following is a 123-amino-acid chain: Putative membrane protein insertion efficiency factor (123 aa).

The disordered stretch occupies residues 1 to 23; the sequence is MGSCGGKHTGKGAPKPYSRNFTD.

This sequence belongs to the UPF0161 family.

It is found in the cell inner membrane. Could be involved in insertion of integral membrane proteins into the membrane. The polypeptide is Putative membrane protein insertion efficiency factor (Brucella ovis (strain ATCC 25840 / 63/290 / NCTC 10512)).